The primary structure comprises 688 residues: Potassium-transporting ATPase ATP-binding subunit (688 aa).

The next 4 membrane-spanning stretches (helical) occupy residues 35–55 (VMFV…QALG), 62–82 (AGFI…ANFA), 219–239 (IALT…IVTL), and 260–280 (VLIA…LSAI). The active-site 4-aspartylphosphate intermediate is Asp313. ATP-binding positions include Asp350, Glu354, 383–390 (FSAHTRMS), and Lys401. Positions 524 and 528 each coordinate Mg(2+). Transmembrane regions (helical) follow at residues 594 to 614 (FAII…LNVM), 622 to 642 (AILS…PLAL), and 668 to 688 (VIVP…VGLA).

It belongs to the cation transport ATPase (P-type) (TC 3.A.3) family. Type IA subfamily. In terms of assembly, the system is composed of three essential subunits: KdpA, KdpB and KdpC.

It localises to the cell inner membrane. The catalysed reaction is K(+)(out) + ATP + H2O = K(+)(in) + ADP + phosphate + H(+). Functionally, part of the high-affinity ATP-driven potassium transport (or Kdp) system, which catalyzes the hydrolysis of ATP coupled with the electrogenic transport of potassium into the cytoplasm. This subunit is responsible for energy coupling to the transport system and for the release of the potassium ions to the cytoplasm. This chain is Potassium-transporting ATPase ATP-binding subunit, found in Dechloromonas aromatica (strain RCB).